The primary structure comprises 581 residues: uncharacterized protein (581 aa).

This is an uncharacterized protein from Borreliella burgdorferi (strain ATCC 35210 / DSM 4680 / CIP 102532 / B31) (Borrelia burgdorferi).